A 441-amino-acid chain; its full sequence is MLETSQTIPELVAWTREREFALNLSTERLAFLLAIAIYNNERLDGEMLEADLVDIFRHISTAFEQSNDTIATRANNAINELVKQRFLNRFSSEFTEGLSIYRLTPLGVGISDYYIRQREFSALRLSVQLSIVADEIQRASEAAEEGGDEHHWRRNVFAPLKYSVAEIFDSIDLSQRVMDENQQSIKEEIAELLTKDWQAAIASCEHLLDETSGNLRELQDTLNAAGDKLQAQLLRIQDCVIGQENLAFVEQLITDLQAKLDRIISWGQQAIDLWIGYDRHVHKFIRTAIDMDKNRVFSQRLRHSIHHYFDHPWFLWTAQAERLVDMRDEELTLREEDALGELPEALQYESLADLHEQIVEHMQTLLIAYRERNEPINLSLVLKEQLAHYPLAKHFDVARIIVDQAVRLGLANDDLSGLYPHWEAINDHGAEVQAHKIDEYK.

A leucine-zipper region spans residues 208–236 (LDETSGNLRELQDTLNAAGDKLQAQLLRI).

This sequence belongs to the MukF family. As to quaternary structure, interacts, and probably forms a ternary complex, with MukE and MukB via its C-terminal region. The complex formation is stimulated by calcium or magnesium. It is required for an interaction between MukE and MukB.

It localises to the cytoplasm. The protein resides in the nucleoid. Functionally, involved in chromosome condensation, segregation and cell cycle progression. May participate in facilitating chromosome segregation by condensation DNA from both sides of a centrally located replisome during cell division. Not required for mini-F plasmid partitioning. Probably acts via its interaction with MukB and MukE. Overexpression results in anucleate cells. It has a calcium binding activity. This Pasteurella multocida (strain Pm70) protein is Chromosome partition protein MukF.